The following is a 101-amino-acid chain: Small ribosomal subunit protein uS14 (101 aa).

Belongs to the universal ribosomal protein uS14 family. In terms of assembly, part of the 30S ribosomal subunit. Contacts proteins S3 and S10.

In terms of biological role, binds 16S rRNA, required for the assembly of 30S particles and may also be responsible for determining the conformation of the 16S rRNA at the A site. The sequence is that of Small ribosomal subunit protein uS14 from Vesicomyosocius okutanii subsp. Calyptogena okutanii (strain HA).